The sequence spans 238 residues: tRNA (guanine-N(7)-)-methyltransferase (238 aa).

4 residues coordinate S-adenosyl-L-methionine: Glu-70, Asp-95, Asp-122, and Asp-145. Asp-145 is an active-site residue. Substrate contacts are provided by residues Lys-149, Asp-181, and 216 to 219 (TKFE).

It belongs to the class I-like SAM-binding methyltransferase superfamily. TrmB family.

It catalyses the reaction guanosine(46) in tRNA + S-adenosyl-L-methionine = N(7)-methylguanosine(46) in tRNA + S-adenosyl-L-homocysteine. It participates in tRNA modification; N(7)-methylguanine-tRNA biosynthesis. In terms of biological role, catalyzes the formation of N(7)-methylguanine at position 46 (m7G46) in tRNA. The chain is tRNA (guanine-N(7)-)-methyltransferase from Neisseria meningitidis serogroup B (strain ATCC BAA-335 / MC58).